Reading from the N-terminus, the 490-residue chain is MSLWSSVKFAQRYAQLPKVFYRLVTPQPLDNSRWVIWNGELAQGFALPKHADDPQLLSVFSGAEPFSAFKPLAMKYAGHQFGVYNPDLGDGRGLLLGEMQNQQGQWFDIHLKGAGLTPFSRMGDGRAVLRSTIREYLCSEAMAALGIETTRALGMTVSDTPVYREQVEQGACLIRLAQTHIRFGHFEHFFYTEQYDELRLLADNVIEWYMPECTAHDKPYLAMFEQVVARTATMIAQWQAVGFAHGVMNTDNMSILGQTFDYGPFGFLDDYEPGYICNHSDYQGRYAFDQQPRVALWNLSALAHALSPLVERDDLELALAQYEPTLGKVFSQLMRQKLGLLSQQEGDSELFNAMFTLLAENHTDYTRFFRTLSQLDSEGAQTVIDLFIDRDAARGWLSRYLERVALEQTASGEAKSAQQRCEQMRAVNPKYILRNYLAQQAIDKAQQGDFSEVHTLAKLLKNPYDEQAEMEAYAHLPPEWGKKMVISCSS.

8 residues coordinate ATP: G89, G91, R92, K112, D124, G125, R175, and R182. D251 (proton acceptor) is an active-site residue. Residues N252 and D261 each coordinate Mg(2+). D261 contacts ATP.

The protein belongs to the SELO family. The cofactor is Mg(2+). Mn(2+) serves as cofactor.

The enzyme catalyses L-seryl-[protein] + ATP = 3-O-(5'-adenylyl)-L-seryl-[protein] + diphosphate. The catalysed reaction is L-threonyl-[protein] + ATP = 3-O-(5'-adenylyl)-L-threonyl-[protein] + diphosphate. It carries out the reaction L-tyrosyl-[protein] + ATP = O-(5'-adenylyl)-L-tyrosyl-[protein] + diphosphate. It catalyses the reaction L-histidyl-[protein] + UTP = N(tele)-(5'-uridylyl)-L-histidyl-[protein] + diphosphate. The enzyme catalyses L-seryl-[protein] + UTP = O-(5'-uridylyl)-L-seryl-[protein] + diphosphate. The catalysed reaction is L-tyrosyl-[protein] + UTP = O-(5'-uridylyl)-L-tyrosyl-[protein] + diphosphate. Nucleotidyltransferase involved in the post-translational modification of proteins. It can catalyze the addition of adenosine monophosphate (AMP) or uridine monophosphate (UMP) to a protein, resulting in modifications known as AMPylation and UMPylation. The sequence is that of Protein nucleotidyltransferase YdiU from Vibrio vulnificus (strain YJ016).